Consider the following 142-residue polypeptide: 3-hydroxyacyl-[acyl-carrier-protein] dehydratase FabZ (142 aa).

His47 is a catalytic residue.

The protein belongs to the thioester dehydratase family. FabZ subfamily.

The protein localises to the cytoplasm. It carries out the reaction a (3R)-hydroxyacyl-[ACP] = a (2E)-enoyl-[ACP] + H2O. Its function is as follows. Involved in unsaturated fatty acids biosynthesis. Catalyzes the dehydration of short chain beta-hydroxyacyl-ACPs and long chain saturated and unsaturated beta-hydroxyacyl-ACPs. The polypeptide is 3-hydroxyacyl-[acyl-carrier-protein] dehydratase FabZ (Thermoanaerobacter pseudethanolicus (strain ATCC 33223 / 39E) (Clostridium thermohydrosulfuricum)).